The chain runs to 271 residues: Tetraspanin-11 (271 aa).

The Cytoplasmic segment spans residues 1–7 (MFRVSNF). Residues 8 to 28 (MVGLANTLVMLVGASAIGYSI) form a helical membrane-spanning segment. Residues 29 to 44 (YMFVHQGVTDCESAIR) lie on the Extracellular side of the membrane. A helical membrane pass occupies residues 45–65 (IPLLTTGLILFLVSLLGVIGS). Over 66–76 (CFKENLAMVSY) the chain is Cytoplasmic. The chain crosses the membrane as a helical span at residues 77-97 (LIILFGGIVALMIFSIFLFFV). At 98–236 (TNKGAGRVVS…LANIREKWRN (139 aa)) the chain is on the extracellular side. 2 N-linked (GlcNAc...) asparagine glycosylation sites follow: Asn-185 and Asn-195. A helical membrane pass occupies residues 237–257 (LLVFNICLLILLITVYSCGCC). The Cytoplasmic segment spans residues 258 to 271 (ARRNNRTARKSDSV).

The protein belongs to the tetraspanin (TM4SF) family.

Its subcellular location is the membrane. Functionally, may be involved in the regulation of cell differentiation. The polypeptide is Tetraspanin-11 (TET11) (Arabidopsis thaliana (Mouse-ear cress)).